Reading from the N-terminus, the 556-residue chain is Urocanate hydratase (556 aa).

NAD(+) is bound by residues 52 to 53 (GG), Gln-130, 176 to 178 (GMG), Glu-196, Arg-201, 242 to 243 (NA), 263 to 267 (QTSAH), 273 to 274 (YL), and Tyr-322. Cys-410 is a catalytic residue. Gly-492 lines the NAD(+) pocket.

It belongs to the urocanase family. The cofactor is NAD(+).

It is found in the cytoplasm. It catalyses the reaction 4-imidazolone-5-propanoate = trans-urocanate + H2O. It functions in the pathway amino-acid degradation; L-histidine degradation into L-glutamate; N-formimidoyl-L-glutamate from L-histidine: step 2/3. Its function is as follows. Catalyzes the conversion of urocanate to 4-imidazolone-5-propionate. In Acidiphilium cryptum (strain JF-5), this protein is Urocanate hydratase.